Reading from the N-terminus, the 717-residue chain is MTKLAQWMFEQYVKDLNLKNRGSPSFRKWLTLQPSLLRYSGVMRANAFDILKYGYPMQQSGYTVATLEIHFKNIRSSFANIYWNRDSEEPEYVCCCATYQSHDGEYRYRFVWYQPFIEAYNAIEAALDPLETIILNLIAARDLDFVVHIFPYNKGHEDYLASTQLILKIFIATLLMDILRIKDNTLDVHLNSDYIIVMERLWPHIKDAIEHFFEAHKDLLGYLIAFRNGGNFAGSLRPSCGQKIVPLTIREVLQMNDINLAVWREVFIMQECSDLVINGIAPCFPIFNTWTYLQGINQIFFENTSLQEKFKKDFIARELSKEIIKGQKTLNDKEFKKLSLHQIQYMESFLLMSDVAIMITTEYVGYTLQSLPGIISRSSYLSPIVKNILMDEDSFMSLLFDLCYGAYVLHKKENVIHADLHLNNMTYYHFNPTSFTDRNKPGKYTLKVKNPVIAFITGPKVETETYVFKHIDGFGCIIDFSRAIMGPNHAIKLERQYGLAFVNTFYRNQSEHILKVLRYYFPEMLTNRENEIQGVILSNFNFFFNSITAIDFYAIARNLRSMLSLDYLHTSEVKRNVEISQTFLDTCQFLEEKAVEFLFKNLHTVLSGKPVEKTAGDVLLPIVFKKFLYPNIPKNILRSFTVIDVYNYNNIKRYSGKAIQTFPPWAQTKEILTHAEGRTFEDIFPRGELVFKKAYAENNHLDKILQRIREQLANENL.

The protein belongs to the asfivirus C717R family.

The protein resides in the virion. This is an uncharacterized protein from African swine fever virus (strain Badajoz 1971 Vero-adapted) (Ba71V).